We begin with the raw amino-acid sequence, 378 residues long: Mannitol-1-phosphate 5-dehydrogenase (378 aa).

Position 4–15 (4–15 (SVHFGAGNIGRG)) interacts with NAD(+).

It belongs to the mannitol dehydrogenase family.

The enzyme catalyses D-mannitol 1-phosphate + NAD(+) = beta-D-fructose 6-phosphate + NADH + H(+). This Streptococcus pneumoniae (strain Hungary19A-6) protein is Mannitol-1-phosphate 5-dehydrogenase.